Reading from the N-terminus, the 489-residue chain is Bifunctional protein HldE (489 aa).

Positions 1–328 are ribokinase; the sequence is METENIHSFD…ELKAQLQDQP (328 aa). 206–209 lines the ATP pocket; sequence NKKE. Residue Asp-276 is part of the active site. The interval 357 to 489 is cytidylyltransferase; the sequence is LTNGCFDLLH…IIQDIRNGRG (133 aa).

In the N-terminal section; belongs to the carbohydrate kinase PfkB family. This sequence in the C-terminal section; belongs to the cytidylyltransferase family. Homodimer.

It carries out the reaction D-glycero-beta-D-manno-heptose 7-phosphate + ATP = D-glycero-beta-D-manno-heptose 1,7-bisphosphate + ADP + H(+). It catalyses the reaction D-glycero-beta-D-manno-heptose 1-phosphate + ATP + H(+) = ADP-D-glycero-beta-D-manno-heptose + diphosphate. Its pathway is nucleotide-sugar biosynthesis; ADP-L-glycero-beta-D-manno-heptose biosynthesis; ADP-L-glycero-beta-D-manno-heptose from D-glycero-beta-D-manno-heptose 7-phosphate: step 1/4. It functions in the pathway nucleotide-sugar biosynthesis; ADP-L-glycero-beta-D-manno-heptose biosynthesis; ADP-L-glycero-beta-D-manno-heptose from D-glycero-beta-D-manno-heptose 7-phosphate: step 3/4. In terms of biological role, catalyzes the phosphorylation of D-glycero-D-manno-heptose 7-phosphate at the C-1 position to selectively form D-glycero-beta-D-manno-heptose-1,7-bisphosphate. Functionally, catalyzes the ADP transfer from ATP to D-glycero-beta-D-manno-heptose 1-phosphate, yielding ADP-D-glycero-beta-D-manno-heptose. This is Bifunctional protein HldE from Desulfatibacillum aliphaticivorans.